The sequence spans 560 residues: Thermosome subunit 1 (560 aa).

Positions 525 to 550 (LSGGQTGSDDDDGGAPGGMGGGMGGM) are disordered. The span at 538–550 (GAPGGMGGGMGGM) shows a compositional bias: gly residues.

The protein belongs to the TCP-1 chaperonin family. The thermosome or CCT complex is a oligomeric complex of two octameric double-ring structures; the complex is probably a heterooligomer of CCT1, CCT2 and CCT3 with yet unknown stoichiometry.

In terms of biological role, molecular chaperone that assists in the folding or refolding of nascent or denatured proteins along with ATP hydrolysis. ATPase activity is highest in thermosome assemblies containing CCT1:CCT2, followed by assemblies containing CCT1:CCT2:CCT3. Required for thermosome ATPase activity. Not required for growth. The sequence is that of Thermosome subunit 1 (cct1) from Haloferax volcanii (strain ATCC 29605 / DSM 3757 / JCM 8879 / NBRC 14742 / NCIMB 2012 / VKM B-1768 / DS2) (Halobacterium volcanii).